We begin with the raw amino-acid sequence, 224 residues long: Uracil-DNA glycosylase 2 (224 aa).

The active-site Proton acceptor is the aspartate 64.

The protein belongs to the uracil-DNA glycosylase (UDG) superfamily. UNG family.

The protein localises to the cytoplasm. It carries out the reaction Hydrolyzes single-stranded DNA or mismatched double-stranded DNA and polynucleotides, releasing free uracil.. In terms of biological role, excises uracil residues from the DNA which can arise as a result of misincorporation of dUMP residues by DNA polymerase or due to deamination of cytosine. The protein is Uracil-DNA glycosylase 2 of Listeria monocytogenes serovar 1/2a (strain ATCC BAA-679 / EGD-e).